We begin with the raw amino-acid sequence, 1011 residues long: Protein translocase subunit SecA, chloroplastic (1011 aa).

Residues M1 to P17 are compositionally biased toward polar residues. The tract at residues M1–H22 is disordered. A chloroplast-targeting transit peptide spans M1–V59. M164–T171 provides a ligand contact to ATP. The disordered stretch occupies residues Q976–S1011.

Belongs to the SecA family.

The protein resides in the plastid. Its subcellular location is the chloroplast stroma. The protein localises to the chloroplast thylakoid membrane. It catalyses the reaction ATP + H2O + chloroplast-proteinSide 1 = ADP + phosphate + chloroplast-proteinSide 2.. Its function is as follows. Has a central role in coupling the hydrolysis of ATP to the transfer of proteins across the thylakoid membrane. Facilitates the transport of precursor proteins from the chloroplast stroma to thylakoid lumen. The protein is Protein translocase subunit SecA, chloroplastic of Pisum sativum (Garden pea).